An 86-amino-acid polypeptide reads, in one-letter code: Small ribosomal subunit protein bS20 (86 aa).

Positions methionine 1–alanine 11 are enriched in basic residues. The disordered stretch occupies residues methionine 1–arginine 27.

Belongs to the bacterial ribosomal protein bS20 family.

Binds directly to 16S ribosomal RNA. The protein is Small ribosomal subunit protein bS20 of Syntrophobacter fumaroxidans (strain DSM 10017 / MPOB).